Reading from the N-terminus, the 356-residue chain is D-alanine--D-alanine ligase (356 aa).

Residues 134–339 (KQLFATRGLP…YSELITDLIN (206 aa)) form the ATP-grasp domain. Residue 167-222 (EGKLTYPVFVKPANLGSSVGISKCTDSETLIHGIEEALQFDRKLVIEQGVNAREVE) participates in ATP binding. Positions 293, 306, and 308 each coordinate Mg(2+).

Belongs to the D-alanine--D-alanine ligase family. Requires Mg(2+) as cofactor. Mn(2+) serves as cofactor.

Its subcellular location is the cytoplasm. It carries out the reaction 2 D-alanine + ATP = D-alanyl-D-alanine + ADP + phosphate + H(+). The protein operates within cell wall biogenesis; peptidoglycan biosynthesis. In terms of biological role, cell wall formation. The sequence is that of D-alanine--D-alanine ligase from Macrococcus caseolyticus (strain JCSC5402) (Macrococcoides caseolyticum).